The sequence spans 345 residues: Anthranilate phosphoribosyltransferase (345 aa).

5-phospho-alpha-D-ribose 1-diphosphate-binding positions include Gly84, 87-88 (GD), Thr92, 94-97 (NVTT), 112-120 (KHGNRSVSS), and Ser124. Gly84 provides a ligand contact to anthranilate. Thr96 contributes to the Mg(2+) binding site. Position 115 (Asn115) interacts with anthranilate. Position 170 (Arg170) interacts with anthranilate. Residues Asp228 and Glu229 each coordinate Mg(2+).

It belongs to the anthranilate phosphoribosyltransferase family. As to quaternary structure, homodimer. The cofactor is Mg(2+).

The enzyme catalyses N-(5-phospho-beta-D-ribosyl)anthranilate + diphosphate = 5-phospho-alpha-D-ribose 1-diphosphate + anthranilate. It participates in amino-acid biosynthesis; L-tryptophan biosynthesis; L-tryptophan from chorismate: step 2/5. In terms of biological role, catalyzes the transfer of the phosphoribosyl group of 5-phosphorylribose-1-pyrophosphate (PRPP) to anthranilate to yield N-(5'-phosphoribosyl)-anthranilate (PRA). In Corynebacterium aurimucosum (strain ATCC 700975 / DSM 44827 / CIP 107346 / CN-1) (Corynebacterium nigricans), this protein is Anthranilate phosphoribosyltransferase.